Here is a 339-residue protein sequence, read N- to C-terminus: Deubiquitinase and deneddylase Dub2 (339 aa).

The chain crosses the membrane as a helical span at residues I36–F56. Active-site residues include H203, D220, and C282.

This sequence belongs to the peptidase C48 family.

Its subcellular location is the secreted. The protein localises to the host cell. It is found in the membrane. In terms of biological role, effector proteins function to alter host cell physiology and promote bacterial survival in host tissues. This protease possesses deubiquitinating and deneddylating activities. This Chlamydia trachomatis serovar L2 (strain ATCC VR-902B / DSM 19102 / 434/Bu) protein is Deubiquitinase and deneddylase Dub2 (cdu2).